The primary structure comprises 346 residues: Histidinol-phosphate aminotransferase (346 aa).

An N6-(pyridoxal phosphate)lysine modification is found at Lys-209.

The protein belongs to the class-II pyridoxal-phosphate-dependent aminotransferase family. Histidinol-phosphate aminotransferase subfamily. As to quaternary structure, homodimer. Requires pyridoxal 5'-phosphate as cofactor.

The enzyme catalyses L-histidinol phosphate + 2-oxoglutarate = 3-(imidazol-4-yl)-2-oxopropyl phosphate + L-glutamate. The protein operates within amino-acid biosynthesis; L-histidine biosynthesis; L-histidine from 5-phospho-alpha-D-ribose 1-diphosphate: step 7/9. The chain is Histidinol-phosphate aminotransferase from Vibrio cholerae serotype O1 (strain ATCC 39541 / Classical Ogawa 395 / O395).